Here is a 360-residue protein sequence, read N- to C-terminus: MAAERGAGQQQSQEMMEVDRRVESEESGDEEGKKHSSGIVADLSEQSLKDGEERGEEDPEEEHELPVDMETINLDRDAEDVDLNHYRIGKIEGFEVLKKVKTLCLRQNLIKCIENLEELQSLRELDLYDNQIKKIENLEALTELEILDISFNLLRNIEGVDKVTQLKKLFLVNNKISKIENLSNLHQLQMLELGSNRIRAIENIDTLTNLESLFLGKNKITKLQNLDALTNLTVLSMQSNRLTKIEGLQNLVNLQELYLSHNGIEVIEGLENNNKLTMLDIASNRIKKIENISHLTEPQEFWMNDNLLESWSDLDELKGARSLETVYLERNPLQKDPQYRRKVMLALPSVRQIDATFVRF.

The disordered stretch occupies residues 1 to 64 (MAAERGAGQQ…GEEDPEEEHE (64 aa)). Ala2 is modified (N-acetylalanine). Ser12, Ser24, Ser27, Ser44, and Ser47 each carry phosphoserine. Over residues 17 to 34 (EVDRRVESEESGDEEGKK) the composition is skewed to basic and acidic residues. Residues 53-63 (ERGEEDPEEEH) are compositionally biased toward acidic residues. LRR repeat units lie at residues 77–98 (DAED…EVLK), 99–120 (KVKT…EELQ), 121–142 (SLRE…EALT), 143–164 (ELEI…DKVT), 165–186 (QLKK…SNLH), 187–208 (QLQM…DTLT), 209–230 (NLES…DALT), 231–252 (NLTV…QNLV), 253–274 (NLQE…ENNN), 275–296 (KLTM…SHLT), and 297–318 (EPQE…DELK). The residue at position 322 (Ser322) is a Phosphoserine. The region spanning 331 to 360 (NPLQKDPQYRRKVMLALPSVRQIDATFVRF) is the LRRCT domain.

This sequence belongs to the SDS22 family. As to quaternary structure, interacts with PPP1CA, PPP1CB and PPP1CC/PPP1G.

The protein resides in the nucleus. Regulatory subunit of protein phosphatase 1. This Pongo abelii (Sumatran orangutan) protein is Protein phosphatase 1 regulatory subunit 7 (PPP1R7).